The sequence spans 178 residues: uncharacterized protein (178 aa).

The segment at 152–178 (KKLKGAEPKEHQAPNFEPPTEIFPESN) is disordered.

It belongs to the EUO family.

This is an uncharacterized protein from Chlamydia pneumoniae (Chlamydophila pneumoniae).